A 421-amino-acid polypeptide reads, in one-letter code: Histidine--tRNA ligase (421 aa).

The protein belongs to the class-II aminoacyl-tRNA synthetase family. As to quaternary structure, homodimer.

The protein localises to the cytoplasm. The catalysed reaction is tRNA(His) + L-histidine + ATP = L-histidyl-tRNA(His) + AMP + diphosphate + H(+). The chain is Histidine--tRNA ligase from Solidesulfovibrio magneticus (strain ATCC 700980 / DSM 13731 / RS-1) (Desulfovibrio magneticus).